A 341-amino-acid polypeptide reads, in one-letter code: tRNA N6-adenosine threonylcarbamoyltransferase (341 aa).

His120 and His124 together coordinate Fe cation. Substrate contacts are provided by residues 142 to 146 (VVSGG), Asp175, Gly188, Asp192, and Asn281. Residue Asp310 coordinates Fe cation.

The protein belongs to the KAE1 / TsaD family. Requires Fe(2+) as cofactor.

The protein localises to the cytoplasm. The enzyme catalyses L-threonylcarbamoyladenylate + adenosine(37) in tRNA = N(6)-L-threonylcarbamoyladenosine(37) in tRNA + AMP + H(+). Required for the formation of a threonylcarbamoyl group on adenosine at position 37 (t(6)A37) in tRNAs that read codons beginning with adenine. Is involved in the transfer of the threonylcarbamoyl moiety of threonylcarbamoyl-AMP (TC-AMP) to the N6 group of A37, together with TsaE and TsaB. TsaD likely plays a direct catalytic role in this reaction. This is tRNA N6-adenosine threonylcarbamoyltransferase from Anoxybacillus flavithermus (strain DSM 21510 / WK1).